The following is a 139-amino-acid chain: uncharacterized protein (139 aa).

The HTH cro/C1-type domain maps to 19 to 73; the sequence is IRLRRTMLGMSQEKLGESLGITFQQIQKYEKGTNRVGASRLQNISQILNVPVSFF. The H-T-H motif DNA-binding region spans 30-49; that stretch reads QEKLGESLGITFQQIQKYEK.

This is an uncharacterized protein from Rhizobium meliloti (strain 1021) (Ensifer meliloti).